The sequence spans 492 residues: Glutamyl-tRNA(Gln) amidotransferase subunit A (492 aa).

Residues lysine 79 and serine 154 each act as charge relay system in the active site. Residue serine 178 is the Acyl-ester intermediate of the active site.

It belongs to the amidase family. GatA subfamily. Heterotrimer of A, B and C subunits.

It carries out the reaction L-glutamyl-tRNA(Gln) + L-glutamine + ATP + H2O = L-glutaminyl-tRNA(Gln) + L-glutamate + ADP + phosphate + H(+). Allows the formation of correctly charged Gln-tRNA(Gln) through the transamidation of misacylated Glu-tRNA(Gln) in organisms which lack glutaminyl-tRNA synthetase. The reaction takes place in the presence of glutamine and ATP through an activated gamma-phospho-Glu-tRNA(Gln). This is Glutamyl-tRNA(Gln) amidotransferase subunit A from Acinetobacter baumannii (strain AB0057).